Here is a 237-residue protein sequence, read N- to C-terminus: Probable aquaporin SIP2-1 (237 aa).

6 consecutive transmembrane segments (helical) span residues phenylalanine 15–serine 35, proline 39–leucine 59, leucine 71–valine 91, valine 122–serine 142, isoleucine 169–tyrosine 189, and valine 202–phenylalanine 222. The NPA 1 signature appears at asparagine 69–leucine 71. The NPA 2 signature appears at asparagine 180–alanine 182.

Belongs to the MIP/aquaporin (TC 1.A.8) family. SIP (TC 1.A.8.10) subfamily. In terms of tissue distribution, expressed in dividing cells and elongating regions of the root tips, emerging lateral roots, root steles, cotyledons, main veins of the rosette leaves, vascular tissues of the flower petals, stigma, stamens (anthers and filaments), pollen and the top and bottom (receptacle) of siliques.

Its subcellular location is the endoplasmic reticulum membrane. Water channel required to facilitate the transport of water across cell membrane. Inactive in yeast cells. This is Probable aquaporin SIP2-1 (SIP2-1) from Arabidopsis thaliana (Mouse-ear cress).